Here is a 241-residue protein sequence, read N- to C-terminus: DNA repair protein RecO (241 aa).

Belongs to the RecO family.

Its function is as follows. Involved in DNA repair and RecF pathway recombination. In Rickettsia canadensis (strain McKiel), this protein is DNA repair protein RecO.